We begin with the raw amino-acid sequence, 177 residues long: Cytochrome c oxidase assembly protein CtaG (177 aa).

The Cytoplasmic segment spans residues 1–8 (MTQKAKNT). A helical; Signal-anchor for type II membrane protein membrane pass occupies residues 9–29 (IYLLILIILSMLCLVYASVPL). Residues 30–177 (YSIFCKVTGY…TFFKYKETTK (148 aa)) lie on the Periplasmic side of the membrane.

The protein belongs to the COX11/CtaG family.

The protein resides in the cell inner membrane. In terms of biological role, exerts its effect at some terminal stage of cytochrome c oxidase synthesis, probably by being involved in the insertion of the copper B into subunit I. The chain is Cytochrome c oxidase assembly protein CtaG from Ehrlichia ruminantium (strain Gardel).